A 670-amino-acid polypeptide reads, in one-letter code: DNA ligase (670 aa).

NAD(+)-binding positions include 32–36 (DAEYD), 81–82 (SL), and glutamate 113. The N6-AMP-lysine intermediate role is filled by lysine 115. Arginine 136, glutamate 173, lysine 290, and lysine 314 together coordinate NAD(+). Positions 406, 409, 424, and 430 each coordinate Zn(2+). Positions 592 to 670 (EIDSPFAGKT…EQEMMRLLGE (79 aa)) constitute a BRCT domain.

Belongs to the NAD-dependent DNA ligase family. LigA subfamily. Requires Mg(2+) as cofactor. The cofactor is Mn(2+).

It carries out the reaction NAD(+) + (deoxyribonucleotide)n-3'-hydroxyl + 5'-phospho-(deoxyribonucleotide)m = (deoxyribonucleotide)n+m + AMP + beta-nicotinamide D-nucleotide.. DNA ligase that catalyzes the formation of phosphodiester linkages between 5'-phosphoryl and 3'-hydroxyl groups in double-stranded DNA using NAD as a coenzyme and as the energy source for the reaction. It is essential for DNA replication and repair of damaged DNA. The protein is DNA ligase of Erwinia tasmaniensis (strain DSM 17950 / CFBP 7177 / CIP 109463 / NCPPB 4357 / Et1/99).